We begin with the raw amino-acid sequence, 345 residues long: DNA primase small subunit PriS (345 aa).

Active-site residues include Asp95 and Asp97. Zn(2+) is bound by residues Cys106, His108, Cys114, and Cys117. Positions 106–117 match the Zinc knuckle motif motif; sequence CNHEPGKVCPIC. The active site involves Asp280.

This sequence belongs to the eukaryotic-type primase small subunit family. In terms of assembly, heterodimer of a small subunit (PriS) and a large subunit (PriL). Requires Mg(2+) as cofactor. The cofactor is Mn(2+).

In terms of biological role, catalytic subunit of DNA primase, an RNA polymerase that catalyzes the synthesis of short RNA molecules used as primers for DNA polymerase during DNA replication. The small subunit contains the primase catalytic core and has DNA synthesis activity on its own, synthesizing DNA strands up to 3 kB. Binding to the large subunit stabilizes and modulates the activity, increasing the rate of DNA synthesis while decreasing the length of the DNA fragments, and conferring RNA synthesis capability for RNA fragments up to 150 bases. The DNA polymerase activity may enable DNA primase to also catalyze primer extension after primer synthesis. May also play a role in DNA repair. Displays gap-filling and strand-displacement activities. This Pyrococcus abyssi (strain GE5 / Orsay) protein is DNA primase small subunit PriS.